A 405-amino-acid chain; its full sequence is Glucose-1-phosphate adenylyltransferase 1 (405 aa).

Residues Tyr-96, Gly-161, 176–177 (EK), and Ser-194 contribute to the alpha-D-glucose 1-phosphate site.

This sequence belongs to the bacterial/plant glucose-1-phosphate adenylyltransferase family. Homotetramer.

It catalyses the reaction alpha-D-glucose 1-phosphate + ATP + H(+) = ADP-alpha-D-glucose + diphosphate. It functions in the pathway glycan biosynthesis; glycogen biosynthesis. In terms of biological role, involved in the biosynthesis of ADP-glucose, a building block required for the elongation reactions to produce glycogen. Catalyzes the reaction between ATP and alpha-D-glucose 1-phosphate (G1P) to produce pyrophosphate and ADP-Glc. This chain is Glucose-1-phosphate adenylyltransferase 1, found in Vibrio parahaemolyticus serotype O3:K6 (strain RIMD 2210633).